Consider the following 1263-residue polypeptide: Topoisomerase 1-associated factor 1 (1263 aa).

Disordered stretches follow at residues 1042–1098 (ERQL…DDSQ) and 1178–1263 (VEES…DEEE). Basic residues predominate over residues 1060 to 1071 (TKGKARKKSKEK). The segment covering 1179 to 1189 (EESDNDDEVEE) has biased composition (acidic residues). The segment covering 1211–1226 (VDTQQDLSDNTSNTSD) has biased composition (polar residues).

It belongs to the timeless family. Component of the fork protection complex (FPC) consisting of TOF1 and CSM3.

It localises to the nucleus. Forms a fork protection complex (FPC) with CSM3 and which is required for chromosome segregation during meiosis and DNA damage repair. FPC coordinates leading and lagging strand synthesis and moves with the replication fork. FPC stabilizes replication forks in a configuration that is recognized by replication checkpoint sensors. In Candida albicans (strain SC5314 / ATCC MYA-2876) (Yeast), this protein is Topoisomerase 1-associated factor 1 (YBL053).